A 213-amino-acid polypeptide reads, in one-letter code: Large ribosomal subunit protein uL3 (213 aa).

This sequence belongs to the universal ribosomal protein uL3 family. As to quaternary structure, part of the 50S ribosomal subunit. Forms a cluster with proteins L14 and L19.

One of the primary rRNA binding proteins, it binds directly near the 3'-end of the 23S rRNA, where it nucleates assembly of the 50S subunit. This Bifidobacterium adolescentis (strain ATCC 15703 / DSM 20083 / NCTC 11814 / E194a) protein is Large ribosomal subunit protein uL3.